The following is a 461-amino-acid chain: Cysteine--tRNA ligase (461 aa).

Residue Cys30 participates in Zn(2+) binding. Positions 32–42 (PTVYSYAHIGN) match the 'HIGH' region motif. Residues Cys212, His237, and Glu241 each contribute to the Zn(2+) site. The short motif at 270–274 (KMSKS) is the 'KMSKS' region element. Lys273 is a binding site for ATP.

Belongs to the class-I aminoacyl-tRNA synthetase family. Monomer. The cofactor is Zn(2+).

The protein resides in the cytoplasm. It carries out the reaction tRNA(Cys) + L-cysteine + ATP = L-cysteinyl-tRNA(Cys) + AMP + diphosphate. In Maricaulis maris (strain MCS10) (Caulobacter maris), this protein is Cysteine--tRNA ligase.